The chain runs to 587 residues: Cyclic GMP-AMP synthase-like receptor (587 aa).

Disordered stretches follow at residues 26 to 48 (IHPSSADGRGLRPSTDTRGRRDD) and 77 to 229 (TRMH…DRPL). 3 stretches are compositionally biased toward basic and acidic residues: residues 95–138 (TRDR…RDSL), 150–185 (DGARPETLTPRHEDHERHNSDRDVVKGVAKVQRESL), and 204–228 (PESRPAKYKESPKQSRTTEEPHDRP). Positions 307, 309, and 409 each coordinate Mg(2+).

Belongs to the mab-21 family. The cofactor is Mg(2+). Mn(2+) is required as a cofactor.

The catalysed reaction is UTP + ATP = 2',3'-cUAMP + 2 diphosphate. Functionally, nucleotidyltransferase that catalyzes the formation of cyclic UMP-AMP (2',3'-cUAMP) from ATP and UTP and plays a key role in innate immunity. Acts as a key sensor of double-stranded DNA (dsDNA), the presence of dsDNA in the cytoplasm being a danger signal that triggers the immune responses. Directly binds dsDNA, activating the nucleotidyltransferase activity, leading to synthesis of 2',3'-cUAMP, a second messenger that binds to and activates Sting, thereby triggering the immune response via activation of the NF-kappa-B transcription factor. The polypeptide is Cyclic GMP-AMP synthase-like receptor (Magallana gigas (Pacific oyster)).